Consider the following 735-residue polypeptide: Catalase-peroxidase (735 aa).

A disordered region spans residues 1-25 (MSDSKCPVTGKSSRQVAGGGTSNRD). Positions 95 to 223 (WHSAGTYRMG…LAAVQMGLIY (129 aa)) form a cross-link, tryptophyl-tyrosyl-methioninium (Trp-Tyr) (with M-249). The active-site Proton acceptor is H96. The segment at residues 223-249 (YINPEGPDGNPDPVASGRDVRETFARM) is a cross-link (tryptophyl-tyrosyl-methioninium (Tyr-Met) (with W-95)). H264 lines the heme b pocket.

It belongs to the peroxidase family. Peroxidase/catalase subfamily. Homodimer or homotetramer. It depends on heme b as a cofactor. Post-translationally, formation of the three residue Trp-Tyr-Met cross-link is important for the catalase, but not the peroxidase activity of the enzyme.

It catalyses the reaction H2O2 + AH2 = A + 2 H2O. It carries out the reaction 2 H2O2 = O2 + 2 H2O. Its function is as follows. Bifunctional enzyme with both catalase and broad-spectrum peroxidase activity. The sequence is that of Catalase-peroxidase from Trichlorobacter lovleyi (strain ATCC BAA-1151 / DSM 17278 / SZ) (Geobacter lovleyi).